Here is a 138-residue protein sequence, read N- to C-terminus: Cysteine desulfuration protein SufE (138 aa).

The Cysteine persulfide intermediate role is filled by Cys51.

Belongs to the SufE family. Homodimer. Interacts with SufS.

The protein resides in the cytoplasm. Its pathway is cofactor biosynthesis; iron-sulfur cluster biosynthesis. Functionally, participates in cysteine desulfuration mediated by SufS. Cysteine desulfuration mobilizes sulfur from L-cysteine to yield L-alanine and constitutes an essential step in sulfur metabolism for biosynthesis of a variety of sulfur-containing biomolecules. Functions as a sulfur acceptor for SufS, by mediating the direct transfer of the sulfur atom from the S-sulfanylcysteine of SufS, an intermediate product of cysteine desulfuration process. This is Cysteine desulfuration protein SufE from Photorhabdus laumondii subsp. laumondii (strain DSM 15139 / CIP 105565 / TT01) (Photorhabdus luminescens subsp. laumondii).